A 334-amino-acid chain; its full sequence is MNLAIVEAPADSTPPPADPLDHLADALFHEMGSPGVYGRTALYEDVVERIAAVISRNREPNTEVMRFPPVMNRAQLERSGYLKSFPNLLGCVCGLHGIESEIDAAISRFDAGGDWTESLSPADLVLSPAACYPLYPIAASRGPVPAAGWSFDVAADCFRREPSRHLDRLQSFRMREFVCIGSADHVSAFRERWIIRAQKIARDLGLTFRIDHANDPFFGRVGQMMAVSQKQLSLKFELLVPLRSEERPTACMSFNYHRDHFGTTWGIVDAAGEPAHTACVAFGMDRLAVAMFHTHGKDVALWPIAVRDLLGLAQTDRGAPSAFEEYRCAKEAGS.

Cysteine 131 lines the Zn(2+) pocket. Residues arginine 159, glutamate 161, and 168 to 169 contribute to the ATP site; that span reads RL. Residue glutamate 176 coordinates Zn(2+). Glutamate 176 contributes to the an L-alpha-amino acid binding site. Residues lysine 235 and 250 to 253 each bind ATP; that span reads ACMS. Position 279 (cysteine 279) interacts with Zn(2+). Residue arginine 286 coordinates ATP.

The protein belongs to the class-II aminoacyl-tRNA synthetase family. Amino acid--[acyl-carrier-protein] ligase subfamily. As to quaternary structure, homodimer. Zn(2+) is required as a cofactor.

It carries out the reaction an L-alpha-amino acid + holo-[ACP] + ATP = an L-alpha-aminoacyl-[ACP] + AMP + diphosphate. Catalyzes the ATP-dependent activation of L-glycine and its transfer to the phosphopantetheine prosthetic group covalently attached to the vicinal carrier protein blr6284 of yet unknown function. May participate in nonribosomal peptide synthesis or related processes. L-alanine is a poor substrate whereas L-serine or D-amino acids are not substrates for ATP-dependent activation. Does not display tRNA aminoacylation activity. The sequence is that of Amino acid--[acyl-carrier-protein] ligase 2 from Bradyrhizobium diazoefficiens (strain JCM 10833 / BCRC 13528 / IAM 13628 / NBRC 14792 / USDA 110).